Reading from the N-terminus, the 161-residue chain is Thy-1 membrane glycoprotein (161 aa).

The N-terminal stretch at 1–19 is a signal peptide; that stretch reads MNLAISIALLLTVLQVSRG. Glutamine 20 bears the Pyrrolidone carboxylic acid mark. Positions 20-126 constitute an Ig-like V-type domain; sequence QKVTSLTACL…SQNVTVLRDK (107 aa). Disulfide bonds link cysteine 28–cysteine 130 and cysteine 38–cysteine 104. Asparagine 42 and asparagine 79 each carry an N-linked (GlcNAc...) asparagine glycan. Serine 82 carries the phosphoserine modification. Asparagine 119 carries an N-linked (GlcNAc...) asparagine glycan. Residue cysteine 130 is the site of GPI-anchor amidated cysteine; alternate attachment. The propeptide at 131–161 is removed in mature form; the sequence is EGISLLAQNTSWLLLLLLSLSLLQATDFMSL. Asparagine 139 carries an N-linked (GlcNAc...) asparagine glycan.

It localises to the cell membrane. Its function is as follows. May play a role in cell-cell or cell-ligand interactions during synaptogenesis and other events in the brain. This is Thy-1 membrane glycoprotein (THY1) from Homo sapiens (Human).